Consider the following 500-residue polypeptide: NAD(P)H-quinone oxidoreductase chain 4, chloroplastic (500 aa).

Transmembrane regions (helical) follow at residues 4–24, 35–55, 87–107, 113–130, 134–154, 167–187, 207–227, 242–262, 272–292, 305–325, 330–350, 386–406, 416–436, and 462–482; these read FPWLTIIVVLPIFAGSFIFFL, YTICICTLELLLTTYAFCYHF, IGPVLLTGFITTLATLAAWPV, LFHFLMLAMYSGQIGSFS, LLLFFIMWELELIPVYLLLSM, FILYTAGGSIFLLMGVLGVGL, VALEIIFYIGFFIAFAVKLPI, HYSTCMLLAGILLKMGAYGLI, AHSIFSPWLMIVGTIQIIYAA, IAYSSVSHMGFILIGIASITD, GAILQIISHGFIGAALFFLAG, LALPGMSGFVAEVIVFLGIIT, IVITFVMAIGMILTPIYLLSM, and LFVSISIFLPVIGIGMYPDFV.

Belongs to the complex I subunit 4 family.

The protein localises to the plastid. Its subcellular location is the chloroplast thylakoid membrane. It carries out the reaction a plastoquinone + NADH + (n+1) H(+)(in) = a plastoquinol + NAD(+) + n H(+)(out). The enzyme catalyses a plastoquinone + NADPH + (n+1) H(+)(in) = a plastoquinol + NADP(+) + n H(+)(out). The polypeptide is NAD(P)H-quinone oxidoreductase chain 4, chloroplastic (Guizotia abyssinica (Niger)).